Here is a 137-residue protein sequence, read N- to C-terminus: Small ribosomal subunit protein uS12 (137 aa).

The segment at 1–57 is disordered; the sequence is MPTINQLVRKPRKSKVKKSKSPALNVGYNSRKKVQTNVSSPQKRGVATRVGTMTPKK. The segment covering 9 to 20 has biased composition (basic residues); the sequence is RKPRKSKVKKSK. A 3-methylthioaspartic acid modification is found at Asp-102.

This sequence belongs to the universal ribosomal protein uS12 family. Part of the 30S ribosomal subunit. Contacts proteins S8 and S17. May interact with IF1 in the 30S initiation complex.

Functionally, with S4 and S5 plays an important role in translational accuracy. In terms of biological role, interacts with and stabilizes bases of the 16S rRNA that are involved in tRNA selection in the A site and with the mRNA backbone. Located at the interface of the 30S and 50S subunits, it traverses the body of the 30S subunit contacting proteins on the other side and probably holding the rRNA structure together. The combined cluster of proteins S8, S12 and S17 appears to hold together the shoulder and platform of the 30S subunit. This Streptococcus suis (strain 05ZYH33) protein is Small ribosomal subunit protein uS12.